The chain runs to 148 residues: SsrA-binding protein (148 aa).

Basic and acidic residues predominate over residues 127-142; sequence KRESEKERDWERDKAR. A disordered region spans residues 127 to 148; sequence KRESEKERDWERDKARLMRVKT.

This sequence belongs to the SmpB family.

The protein resides in the cytoplasm. In terms of biological role, required for rescue of stalled ribosomes mediated by trans-translation. Binds to transfer-messenger RNA (tmRNA), required for stable association of tmRNA with ribosomes. tmRNA and SmpB together mimic tRNA shape, replacing the anticodon stem-loop with SmpB. tmRNA is encoded by the ssrA gene; the 2 termini fold to resemble tRNA(Ala) and it encodes a 'tag peptide', a short internal open reading frame. During trans-translation Ala-aminoacylated tmRNA acts like a tRNA, entering the A-site of stalled ribosomes, displacing the stalled mRNA. The ribosome then switches to translate the ORF on the tmRNA; the nascent peptide is terminated with the 'tag peptide' encoded by the tmRNA and targeted for degradation. The ribosome is freed to recommence translation, which seems to be the essential function of trans-translation. The sequence is that of SsrA-binding protein from Aromatoleum aromaticum (strain DSM 19018 / LMG 30748 / EbN1) (Azoarcus sp. (strain EbN1)).